The primary structure comprises 253 residues: Probable transcriptional regulatory protein Tpet_0454 (253 aa).

The protein belongs to the TACO1 family.

It localises to the cytoplasm. The sequence is that of Probable transcriptional regulatory protein Tpet_0454 from Thermotoga petrophila (strain ATCC BAA-488 / DSM 13995 / JCM 10881 / RKU-1).